The following is a 167-amino-acid chain: RNA pyrophosphohydrolase (167 aa).

The 151-residue stretch at 8–158 folds into the Nudix hydrolase domain; that stretch reads PYRRNVGAML…KRDIYRTLVR (151 aa). The Nudix box signature appears at 49–70; that stretch reads GGIDADEDPEEAVLRELREEIG.

Belongs to the Nudix hydrolase family. RppH subfamily. A divalent metal cation is required as a cofactor.

Accelerates the degradation of transcripts by removing pyrophosphate from the 5'-end of triphosphorylated RNA, leading to a more labile monophosphorylated state that can stimulate subsequent ribonuclease cleavage. This is RNA pyrophosphohydrolase from Gluconacetobacter diazotrophicus (strain ATCC 49037 / DSM 5601 / CCUG 37298 / CIP 103539 / LMG 7603 / PAl5).